The primary structure comprises 184 residues: MPHFHYSLTDEQAAELVFKKYGVRITPEQIAKAYAPEQRMSWKKSVEVARFIKGMTLKQAKAWLEDVVKLKRPIPIKTFKKKQAHHATPWEGWPVAKWPVKVAKRYLQLLENLENNAKFKGLDVERLVIIHAAAHKGIKIPNIMPRAFGRATPFNEETVNVEIVAAELPKEVVPKRYKLNLVKR.

It belongs to the universal ribosomal protein uL22 family. As to quaternary structure, part of the 50S ribosomal subunit.

Its function is as follows. This protein binds specifically to 23S rRNA. It makes multiple contacts with different domains of the 23S rRNA in the assembled 50S subunit and ribosome. In terms of biological role, the globular domain of the protein is located near the polypeptide exit tunnel on the outside of the subunit, while an extended beta-hairpin is found that lines the wall of the exit tunnel in the center of the 70S ribosome. This Pyrobaculum calidifontis (strain DSM 21063 / JCM 11548 / VA1) protein is Large ribosomal subunit protein uL22.